The primary structure comprises 291 residues: Bifunctional protein FolD (291 aa).

Residues 173 to 175 and S198 each bind NADP(+); that span reads GRS.

This sequence belongs to the tetrahydrofolate dehydrogenase/cyclohydrolase family. As to quaternary structure, homodimer.

The catalysed reaction is (6R)-5,10-methylene-5,6,7,8-tetrahydrofolate + NADP(+) = (6R)-5,10-methenyltetrahydrofolate + NADPH. The enzyme catalyses (6R)-5,10-methenyltetrahydrofolate + H2O = (6R)-10-formyltetrahydrofolate + H(+). It participates in one-carbon metabolism; tetrahydrofolate interconversion. Functionally, catalyzes the oxidation of 5,10-methylenetetrahydrofolate to 5,10-methenyltetrahydrofolate and then the hydrolysis of 5,10-methenyltetrahydrofolate to 10-formyltetrahydrofolate. The sequence is that of Bifunctional protein FolD from Psychrobacter sp. (strain PRwf-1).